The chain runs to 174 residues: Balbiani ring protein 1 (174 aa).

The segment at 28–174 is disordered; it reads KCRCTSAGKP…RPEGCGSAMR (147 aa). Repeat copies occupy residues 42–52, 53–63, 64–74, 75–85, 124–134, 135–145, 146–156, and 157–167. 4 X 11 AA tandem repeats stretches follow at residues 42 to 85 and 124 to 167; these read EPSK…PRPE. 2 stretches are compositionally biased toward basic and acidic residues: residues 49–100 and 121–159; these read PRPE…EKCA and RKSE…EKPS.

As to expression, salivary gland.

The protein resides in the secreted. In terms of biological role, used by the larvae to construct a supramolecular structure, the larval tube. The protein is Balbiani ring protein 1 (BR1) of Chironomus tentans (Midge).